The following is a 423-amino-acid chain: F-box/LRR-repeat protein 2 (423 aa).

The region spanning 9–55 (GRINKKLPKELLLRIFSFLDIVTLCRCAQISKAWNILALDGSNWQRI) is the F-box domain. 13 LRR repeats span residues 61-87 (QTDV…SLRG), 88-113 (CIGV…NLNG), 114-139 (CTKI…DLTS), 140-165 (CVSI…NLSW), 166-191 (CDQI…LLRG), 192-217 (CTQL…NLQS), 218-243 (CSRI…CLSG), 244-269 (CSNL…EAAR), 270-295 (CSHL…DLEE), 296-321 (CILI…SLSH), 322-350 (CELI…ELDN), 351-375 (CLLI…ELYD), and 376-401 (CQQV…AYFA). Residues 80–90 (LRKLSLRGCIG) form an interaction with Calmodulin region. Residue K201 forms a Glycyl lysine isopeptide (Lys-Gly) (interchain with G-Cter in ubiquitin) linkage. A Phosphothreonine modification is found at T404. C420 carries S-geranylgeranyl cysteine lipidation. The short motif at 420 to 423 (CVIL) is the CAAX motif element.

As to quaternary structure, part of the SCF (SKP1-CUL1-F-box) E3 ubiquitin-protein ligase complex SCF(FBXL2) composed of CUL1, SKP1, RBX1 and FBXL2. Interacts with calmodulin; may antagonize substrate ubiquitination by SCF(FBXL2). May interact with PIK3R1. Interacts with PTPN13. In terms of processing, phosphorylated by GSK-beta (GSK3B), promoting recognition by FBXO3, leading to its ubiquitination by the SCF(FBXO3) complex. Ubiquitinated at Lys-201 by the SCF(FBXO3) complex in response to lipopolysaccharide (LPS), leading to its degradation by the proteasome.

The protein resides in the membrane. It functions in the pathway protein modification; protein ubiquitination. Calcium-activated substrate recognition component of the SCF (SKP1-cullin-F-box protein) E3 ubiquitin-protein ligase complex, SCF(FBXL2), which mediates the ubiquitination and subsequent proteasomal degradation of target proteins. Unlike many F-box proteins, FBXL2 does not seem to target phosphodegron within its substrates but rather calmodulin-binding motifs and is thereby antagonized by calmodulin. This is the case for the cyclins CCND2 and CCND3 which polyubiquitination and subsequent degradation are inhibited by calmodulin. Through CCND2 and CCND3 degradation induces cell-cycle arrest in G(0). SCF(FBXL2) also mediates PIK3R2 ubiquitination and proteasomal degradation thereby regulating phosphatidylinositol 3-kinase signaling and autophagy. PCYT1A monoubiquitination by SCF(FBXL2) and subsequent degradation regulates synthesis of phosphatidylcholine, which is utilized for formation of membranes and of pulmonary surfactant. The SCF(FBXL2) complex acts as a regulator of inflammation by mediating ubiquitination and degradation of TRAF proteins (TRAF1, TRAF2, TRAF3, TRAF4, TRAF5 and TRAF6). The SCF(FBXL2) complex acts as a negative regulator of the NLRP3 inflammasome by mediating ubiquitination and degradation of NLRP3. This is F-box/LRR-repeat protein 2 from Pongo abelii (Sumatran orangutan).